Here is a 108-residue protein sequence, read N- to C-terminus: UPF0102 protein Tpet_0671 (108 aa).

This sequence belongs to the UPF0102 family.

The sequence is that of UPF0102 protein Tpet_0671 from Thermotoga petrophila (strain ATCC BAA-488 / DSM 13995 / JCM 10881 / RKU-1).